A 156-amino-acid chain; its full sequence is Succinate dehydrogenase assembly factor 2-A, mitochondrial (156 aa).

The transit peptide at 1–24 (MLRQFLVSTAVRRVVVPSMAQTRC) directs the protein to the mitochondrion. Residues 35-62 (TPGEIVDYDDPPHIPVPEYPSRPDEPLE) form a disordered region.

Belongs to the SDHAF2 family. Interacts with the flavoprotein subunit within the SDH catalytic dimer.

The protein localises to the mitochondrion matrix. In terms of biological role, plays an essential role in the assembly of succinate dehydrogenase (SDH), an enzyme complex (also referred to as respiratory complex II) that is a component of both the tricarboxylic acid (TCA) cycle and the mitochondrial electron transport chain, and which couples the oxidation of succinate to fumarate with the reduction of ubiquinone (coenzyme Q) to ubiquinol. Required for flavinylation (covalent attachment of FAD) of the flavoprotein subunit of the SDH catalytic dimer. The polypeptide is Succinate dehydrogenase assembly factor 2-A, mitochondrial (Drosophila ananassae (Fruit fly)).